We begin with the raw amino-acid sequence, 444 residues long: Glutamyl-tRNA reductase (444 aa).

Residues Thr-41–Arg-44, Ser-102, Glu-107–Glu-109, and Gln-113 each bind substrate. Cys-42 (nucleophile) is an active-site residue. Residue Gly-181–Ala-186 coordinates NADP(+).

Belongs to the glutamyl-tRNA reductase family. As to quaternary structure, homodimer.

The enzyme catalyses (S)-4-amino-5-oxopentanoate + tRNA(Glu) + NADP(+) = L-glutamyl-tRNA(Glu) + NADPH + H(+). It functions in the pathway porphyrin-containing compound metabolism; protoporphyrin-IX biosynthesis; 5-aminolevulinate from L-glutamyl-tRNA(Glu): step 1/2. Catalyzes the NADPH-dependent reduction of glutamyl-tRNA(Glu) to glutamate 1-semialdehyde (GSA). This Cutibacterium acnes (strain DSM 16379 / KPA171202) (Propionibacterium acnes) protein is Glutamyl-tRNA reductase.